A 135-amino-acid chain; its full sequence is Large ribosomal subunit protein eL32 (135 aa).

The protein belongs to the eukaryotic ribosomal protein eL32 family.

The sequence is that of Large ribosomal subunit protein eL32 from Methanococcus maripaludis (strain C7 / ATCC BAA-1331).